The following is a 324-amino-acid chain: Phospho-N-acetylmuramoyl-pentapeptide-transferase (324 aa).

The next 10 membrane-spanning stretches (helical) occupy residues 5-25 (VILF…PILI), 50-70 (GTPT…AIVM), 77-97 (LSAE…LGFL), 117-137 (LIGQ…CHFS), 147-167 (LSID…VGGS), 176-196 (LDGL…ILAW), 203-223 (VAIF…FNAH), 227-247 (VFMG…VAIL), 250-270 (LEIL…SVIL), and 302-322 (VVVT…YIEV).

Belongs to the glycosyltransferase 4 family. MraY subfamily. Mg(2+) serves as cofactor.

It localises to the cell membrane. It catalyses the reaction UDP-N-acetyl-alpha-D-muramoyl-L-alanyl-gamma-D-glutamyl-meso-2,6-diaminopimeloyl-D-alanyl-D-alanine + di-trans,octa-cis-undecaprenyl phosphate = di-trans,octa-cis-undecaprenyl diphospho-N-acetyl-alpha-D-muramoyl-L-alanyl-D-glutamyl-meso-2,6-diaminopimeloyl-D-alanyl-D-alanine + UMP. It functions in the pathway cell wall biogenesis; peptidoglycan biosynthesis. Catalyzes the initial step of the lipid cycle reactions in the biosynthesis of the cell wall peptidoglycan: transfers peptidoglycan precursor phospho-MurNAc-pentapeptide from UDP-MurNAc-pentapeptide onto the lipid carrier undecaprenyl phosphate, yielding undecaprenyl-pyrophosphoryl-MurNAc-pentapeptide, known as lipid I. The polypeptide is Phospho-N-acetylmuramoyl-pentapeptide-transferase (Bacillus velezensis (strain DSM 23117 / BGSC 10A6 / LMG 26770 / FZB42) (Bacillus amyloliquefaciens subsp. plantarum)).